Here is a 154-residue protein sequence, read N- to C-terminus: Ribosomal RNA large subunit methyltransferase H (154 aa).

Residue glycine 102 coordinates S-adenosyl-L-methionine.

It belongs to the RNA methyltransferase RlmH family. Homodimer.

The protein resides in the cytoplasm. The enzyme catalyses pseudouridine(1915) in 23S rRNA + S-adenosyl-L-methionine = N(3)-methylpseudouridine(1915) in 23S rRNA + S-adenosyl-L-homocysteine + H(+). Its function is as follows. Specifically methylates the pseudouridine at position 1915 (m3Psi1915) in 23S rRNA. The sequence is that of Ribosomal RNA large subunit methyltransferase H from Phenylobacterium zucineum (strain HLK1).